We begin with the raw amino-acid sequence, 61 residues long: MAKKTLKVTQYKSASGRLEAHKACVRGLGLRRIGHTVEVEDTPSVRGMINKVNYMVKVEEE.

Belongs to the universal ribosomal protein uL30 family. As to quaternary structure, part of the 50S ribosomal subunit.

This Teredinibacter turnerae (strain ATCC 39867 / T7901) protein is Large ribosomal subunit protein uL30.